The primary structure comprises 877 residues: AP-5 complex subunit beta-1 (877 aa).

Probably part of the adaptor protein complex 5 (AP-5), a tetramer composed of AP5B1, AP5M1, AP5S1 and AP5Z1. Interacts with ZFYVE26 and SPG11.

In terms of biological role, as part of AP-5, a probable fifth adaptor protein complex, it may be involved in endosomal transport. The polypeptide is AP-5 complex subunit beta-1 (AP5B1) (Bos taurus (Bovine)).